The sequence spans 83 residues: Short neurotoxin VAN-10 (83 aa).

An N-terminal signal peptide occupies residues 1 to 21 (MKTLLLTLVVVTIVCLDLGYT). 4 disulfide bridges follow: Cys24-Cys45, Cys38-Cys62, Cys64-Cys75, and Cys76-Cys81.

The protein belongs to the three-finger toxin family. Short-chain subfamily. Type I alpha-neurotoxin sub-subfamily. In terms of tissue distribution, expressed by the venom gland.

The protein localises to the secreted. Functionally, binds to muscle nicotinic acetylcholine receptor (nAChR) and inhibit acetylcholine from binding to the receptor, thereby impairing neuromuscular transmission. This Laticauda laticaudata (Blue-ringed sea krait) protein is Short neurotoxin VAN-10.